The following is a 270-amino-acid chain: Shikimate dehydrogenase (NADP(+)) (270 aa).

Shikimate-binding positions include 14–16 and threonine 60; that span reads SKS. Residue lysine 64 is the Proton acceptor of the active site. Glutamate 76 contributes to the NADP(+) binding site. The shikimate site is built by asparagine 85 and aspartate 101. Residues 125–129, 149–154, and methionine 213 contribute to the NADP(+) site; these read GAGGA and NRTASR. A shikimate-binding site is contributed by tyrosine 215. Residue glycine 236 participates in NADP(+) binding.

It belongs to the shikimate dehydrogenase family. In terms of assembly, homodimer.

The enzyme catalyses shikimate + NADP(+) = 3-dehydroshikimate + NADPH + H(+). Its pathway is metabolic intermediate biosynthesis; chorismate biosynthesis; chorismate from D-erythrose 4-phosphate and phosphoenolpyruvate: step 4/7. In terms of biological role, involved in the biosynthesis of the chorismate, which leads to the biosynthesis of aromatic amino acids. Catalyzes the reversible NADPH linked reduction of 3-dehydroshikimate (DHSA) to yield shikimate (SA). In Stutzerimonas stutzeri (strain A1501) (Pseudomonas stutzeri), this protein is Shikimate dehydrogenase (NADP(+)).